A 702-amino-acid polypeptide reads, in one-letter code: Ribosomal RNA large subunit methyltransferase K/L (702 aa).

The region spanning 43 to 154 is the THUMP domain; sequence LVYQSLMWSR…KETASIALDL (112 aa).

This sequence belongs to the methyltransferase superfamily. RlmKL family.

It is found in the cytoplasm. The enzyme catalyses guanosine(2445) in 23S rRNA + S-adenosyl-L-methionine = N(2)-methylguanosine(2445) in 23S rRNA + S-adenosyl-L-homocysteine + H(+). It catalyses the reaction guanosine(2069) in 23S rRNA + S-adenosyl-L-methionine = N(2)-methylguanosine(2069) in 23S rRNA + S-adenosyl-L-homocysteine + H(+). Its function is as follows. Specifically methylates the guanine in position 2445 (m2G2445) and the guanine in position 2069 (m7G2069) of 23S rRNA. The protein is Ribosomal RNA large subunit methyltransferase K/L of Shigella flexneri serotype 5b (strain 8401).